We begin with the raw amino-acid sequence, 945 residues long: Kinesin-like protein KIN-7F (945 aa).

The 323-residue stretch at 34 to 356 (RILVSVRLRP…LLFASCAKEV (323 aa)) folds into the Kinesin motor domain. 120-127 (GQTSSGKT) serves as a coordination point for ATP. Residues 365–437 (VMSDKALVKQ…QDLLQVVGDN (73 aa)) are a coiled coil. Disordered regions lie at residues 484 to 512 (RRVAQREHKPQQAENNVQFTTPSRYSVSS) and 553 to 588 (NECLESSAVGSNSLQDPNAGSSMHINNDSNSSMNSR). 2 stretches are compositionally biased toward polar residues: residues 495–512 (QAENNVQFTTPSRYSVSS) and 560–587 (AVGSNSLQDPNAGSSMHINNDSNSSMNS).

The protein belongs to the TRAFAC class myosin-kinesin ATPase superfamily. Kinesin family. KIN-7 subfamily. Binds microtubules.

Functionally, binds ATP/ADP in vitro. Possesses low ATPase activity but high affinity for microtubules. The chain is Kinesin-like protein KIN-7F from Oryza sativa subsp. japonica (Rice).